Reading from the N-terminus, the 364-residue chain is UDP-3-O-acylglucosamine N-acyltransferase (364 aa).

His267 functions as the Proton acceptor in the catalytic mechanism.

Belongs to the transferase hexapeptide repeat family. LpxD subfamily. In terms of assembly, homotrimer.

The catalysed reaction is a UDP-3-O-[(3R)-3-hydroxyacyl]-alpha-D-glucosamine + a (3R)-hydroxyacyl-[ACP] = a UDP-2-N,3-O-bis[(3R)-3-hydroxyacyl]-alpha-D-glucosamine + holo-[ACP] + H(+). It participates in bacterial outer membrane biogenesis; LPS lipid A biosynthesis. Functionally, catalyzes the N-acylation of UDP-3-O-acylglucosamine using 3-hydroxyacyl-ACP as the acyl donor. Is involved in the biosynthesis of lipid A, a phosphorylated glycolipid that anchors the lipopolysaccharide to the outer membrane of the cell. In Bordetella petrii (strain ATCC BAA-461 / DSM 12804 / CCUG 43448), this protein is UDP-3-O-acylglucosamine N-acyltransferase.